The chain runs to 193 residues: Anthranilate synthase component 2 (193 aa).

The Glutamine amidotransferase type-1 domain occupies 3 to 193 (DILLLDNVDS…EQTLAWALAK (191 aa)). 57-59 (GPG) contributes to the L-glutamine binding site. The Nucleophile; for GATase activity role is filled by Cys84. L-glutamine contacts are provided by residues Gln88 and 134–135 (SL). Active-site for GATase activity residues include His170 and Glu172.

Heterotetramer consisting of two non-identical subunits: a beta subunit (TrpG) and a large alpha subunit (TrpE).

The catalysed reaction is chorismate + L-glutamine = anthranilate + pyruvate + L-glutamate + H(+). It functions in the pathway amino-acid biosynthesis; L-tryptophan biosynthesis; L-tryptophan from chorismate: step 1/5. Functionally, part of a heterotetrameric complex that catalyzes the two-step biosynthesis of anthranilate, an intermediate in the biosynthesis of L-tryptophan. In the first step, the glutamine-binding beta subunit (TrpG) of anthranilate synthase (AS) provides the glutamine amidotransferase activity which generates ammonia as a substrate that, along with chorismate, is used in the second step, catalyzed by the large alpha subunit of AS (TrpE) to produce anthranilate. In the absence of TrpG, TrpE can synthesize anthranilate directly from chorismate and high concentrations of ammonia. This is Anthranilate synthase component 2 (trpG) from Serratia marcescens.